Reading from the N-terminus, the 1904-residue chain is Fatty acid synthase beta subunit hexB (1904 aa).

The segment at 24 to 395 (LSVAFGGQGP…TEGTGVRVIQ (372 aa)) is acetyltransferase (AT) domain. The interval 447–691 (TQLLNAPPVM…LIVQTEGVGD (245 aa)) is enoyl reductase (ER) domain. The dehydratase (DH) domain stretch occupies residues 1001–1491 (GPAADCWTHH…RPNDRLKIQL (491 aa)). The 114-residue stretch at 1399-1512 (PGWNEGSTVL…MKVQAFNDET (114 aa)) folds into the MaoC-like domain. The interval 1530 to 1893 (YVFCGQGSQE…IEHVQSVTGS (364 aa)) is malonyl/palmitoyl transferase (MT/PT) domain.

Belongs to the fungal fatty acid synthetase subunit beta family. As to quaternary structure, [Alpha(6)beta(6)] hexamers of two multifunctional subunits (alpha and beta).

The catalysed reaction is acetyl-CoA + n malonyl-CoA + 2n NADPH + 4n H(+) = a long-chain-acyl-CoA + n CoA + n CO2 + 2n NADP(+).. It carries out the reaction holo-[ACP] + acetyl-CoA = acetyl-[ACP] + CoA. The enzyme catalyses holo-[ACP] + malonyl-CoA = malonyl-[ACP] + CoA. It catalyses the reaction a (3R)-hydroxyacyl-[ACP] = a (2E)-enoyl-[ACP] + H2O. The catalysed reaction is a 2,3-saturated acyl-[ACP] + NAD(+) = a (2E)-enoyl-[ACP] + NADH + H(+). It carries out the reaction (9Z)-octadecenoyl-[ACP] + H2O = (9Z)-octadecenoate + holo-[ACP] + H(+). Its pathway is mycotoxin biosynthesis. Its function is as follows. Fatty acid synthase beta subunit; part of the fragmented gene cluster that mediates the biosynthesis of dothistromin (DOTH), a polyketide toxin very similar in structure to the aflatoxin precursor, versicolorin B. The first step of the pathway is the conversion of acetate to norsolorinic acid (NOR) and requires the fatty acid synthase subunits hexA and hexB, as well as the polyketide synthase pksA. PksA combines a hexanoyl starter unit and 7 malonyl-CoA extender units to synthesize the precursor NOR. The hexanoyl starter unit is provided to the acyl-carrier protein (ACP) domain by the fungal fatty acid synthase hexA/hexB. The second step is the conversion of NOR to averantin (AVN) and requires the norsolorinic acid ketoreductase nor1, which catalyzes the dehydration of norsolorinic acid to form (1'S)-averantin. The cytochrome P450 monooxygenase avnA then catalyzes the hydroxylation of AVN to 5'hydroxyaverantin (HAVN). The next step is performed by adhA that transforms HAVN to averufin (AVF). Averufin might then be converted to hydroxyversicolorone by cypX and avfA. Hydroxyversicolorone is further converted versiconal hemiacetal acetate (VHA) by moxY. VHA is then the substrate for the versiconal hemiacetal acetate esterase est1 to yield versiconal (VAL). Versicolorin B synthase vbsA then converts VAL to versicolorin B (VERB) by closing the bisfuran ring. Then, the activity of the versicolorin B desaturase verB leads to versicolorin A (VERA). DotB, a predicted chloroperoxidase, may perform epoxidation of the A-ring of VERA. Alternatively, a cytochrome P450, such as cypX or avnA could catalyze this step. It is also possible that another, uncharacterized, cytochrome P450 enzyme is responsible for this step. Opening of the epoxide could potentially be achieved by the epoxide hydrolase epoA. However, epoA seems not to be required for DOTH biosynthesis, but other epoxide hydrolases may have the ability to complement this hydrolysis. Alternatively, opening of the epoxide ring could be achieved non-enzymatically. The next step is the deoxygenation of ring A to yield the 5,8-dihydroxyanthraquinone which is most likely catalyzed by the NADPH dehydrogenase encoded by ver1. The last stages of DOTH biosynthesis are proposed to involve hydroxylation of the bisfuran. OrdB and norB might have oxidative roles here. An alternative possibility is that cytochrome P450 monoogenases such as avnA and cypX might perform these steps in addition to previously proposed steps. In Dothistroma septosporum (strain NZE10 / CBS 128990) (Red band needle blight fungus), this protein is Fatty acid synthase beta subunit hexB.